Reading from the N-terminus, the 30-residue chain is Dermaseptin-DI4 (30 aa).

Expressed by the skin glands.

It is found in the secreted. Its function is as follows. Antibacterial activity against Gram-positive bacteria S.aureus and E.faecalis, and Gram-negative bacteria P.aeruginosa and E.coli. The protein is Dermaseptin-DI4 of Phyllomedusa distincta (Monkey frog).